The chain runs to 161 residues: Thy-1 membrane glycoprotein (161 aa).

Positions methionine 1–glycine 19 are cleaved as a signal peptide. Glutamine 20 is subject to Pyrrolidone carboxylic acid. One can recognise an Ig-like V-type domain in the interval glutamine 20–lysine 126. Cystine bridges form between cysteine 28/cysteine 130 and cysteine 38/cysteine 104. Residues asparagine 42 and asparagine 79 are each glycosylated (N-linked (GlcNAc...) asparagine). The residue at position 82 (serine 82) is a Phosphoserine. An N-linked (GlcNAc...) asparagine glycan is attached at asparagine 119. Residue cysteine 130 is the site of GPI-anchor amidated cysteine; alternate attachment. Positions glutamate 131 to leucine 161 are cleaved as a propeptide — removed in mature form. N-linked (GlcNAc...) asparagine glycosylation is present at asparagine 139.

The protein resides in the cell membrane. Its function is as follows. May play a role in cell-cell or cell-ligand interactions during synaptogenesis and other events in the brain. This is Thy-1 membrane glycoprotein (THY1) from Macaca mulatta (Rhesus macaque).